We begin with the raw amino-acid sequence, 257 residues long: Membrane protein insertase YidC 1 (257 aa).

Positions 1 to 20 are cleaved as a signal peptide; the sequence is MYRKFGMAAMLVSILLLMTG. Residue cysteine 21 is the site of N-palmitoyl cysteine attachment. Residue cysteine 21 is the site of S-diacylglycerol cysteine attachment. 5 consecutive transmembrane segments (helical) span residues 35 to 55, 59 to 79, 129 to 149, 160 to 180, and 205 to 225; these read IWDS…ANAF, FGLA…PLMI, LAGC…YHAI, FLWF…AGIT, and VMIL…WVIG.

Belongs to the OXA1/ALB3/YidC family. Type 2 subfamily.

It localises to the cell membrane. Required for the insertion and/or proper folding and/or complex formation of integral membrane proteins into the membrane. Involved in integration of membrane proteins that insert both dependently and independently of the Sec translocase complex, as well as at least some lipoproteins. The chain is Membrane protein insertase YidC 1 from Halalkalibacterium halodurans (strain ATCC BAA-125 / DSM 18197 / FERM 7344 / JCM 9153 / C-125) (Bacillus halodurans).